Reading from the N-terminus, the 471-residue chain is Acetylcholinesterase collagenic tail peptide (471 aa).

The first 30 residues, methionine 1 to glycine 30, serve as a signal peptide directing secretion. A PRAD region spans residues cysteine 70–phenylalanine 86. Collagen-like domains are found at residues glycine 118–proline 282 and glycine 293–cysteine 307. Disordered regions lie at residues glutamate 140–glycine 205 and lysine 237–proline 267. Composition is skewed to low complexity over residues valine 155–serine 164 and alanine 242–arginine 251. 2 consecutive repeat copies span residues phenylalanine 388–cysteine 413 and tyrosine 420–cysteine 443. The 2 X 26 AA approximate repeats stretch occupies residues phenylalanine 388–cysteine 443.

It belongs to the COLQ family. The asymmetric form of AChE is a disulfide-bonded oligomer composed of a collagenic subunit (Q) and a variable number of asymmetric (T) catalytic subunits. The N-terminal of the collagenic subunit (Q) associates with the C-terminal of the catalytic subunit (T). Expressed in electric organs but not in muscle.

The protein resides in the synapse. Anchors the catalytic subunits of asymmetric AChE to the synaptic basal lamina. This Torpedo marmorata (Marbled electric ray) protein is Acetylcholinesterase collagenic tail peptide.